The sequence spans 360 residues: tRNA (guanine(9)-N1)-methyltransferase (360 aa).

Residues Met-1 to Glu-77 form a disordered region. Composition is skewed to basic and acidic residues over residues Gln-8 to Arg-24 and Met-33 to Lys-55. A compositionally biased stretch (basic residues) spans Gln-56–Glu-67. Residues Arg-68 to Glu-77 are compositionally biased toward basic and acidic residues. The SAM-dependent MTase TRM10-type domain occupies Arg-94–Gly-293. Residues Leu-199 to Thr-200, Gly-219, Asp-223 to Tyr-227, Cys-231, Leu-245, and Gln-257 to Leu-259 contribute to the S-adenosyl-L-methionine site. Residue Asp-223 is the Proton acceptor of the active site. The tract at residues Val-291–His-360 is disordered. The segment covering His-297–Glu-306 has biased composition (basic and acidic residues). Residues Pro-307 to Val-324 are compositionally biased toward low complexity. A compositionally biased stretch (polar residues) spans Gln-328–Leu-343.

The protein belongs to the class IV-like SAM-binding methyltransferase superfamily. TRM10 family. As to quaternary structure, monomer.

The protein localises to the cytoplasm. The protein resides in the nucleus. It catalyses the reaction guanosine(9) in tRNA + S-adenosyl-L-methionine = N(1)-methylguanosine(9) in tRNA + S-adenosyl-L-homocysteine + H(+). S-adenosyl-L-methionine-dependent guanine N(1)-methyltransferase that catalyzes the formation of N(1)-methylguanine at position 9 (m1G9) in cytoplasmic tRNA. This chain is tRNA (guanine(9)-N1)-methyltransferase, found in Debaryomyces hansenii (strain ATCC 36239 / CBS 767 / BCRC 21394 / JCM 1990 / NBRC 0083 / IGC 2968) (Yeast).